A 235-amino-acid chain; its full sequence is Glucosamine-6-phosphate deaminase (235 aa).

D62 acts as the Proton acceptor; for enolization step in catalysis. The active-site For ring-opening step is N128. Catalysis depends on H130, which acts as the Proton acceptor; for ring-opening step. The active-site For ring-opening step is the E135.

This sequence belongs to the glucosamine/galactosamine-6-phosphate isomerase family. NagB subfamily.

The catalysed reaction is alpha-D-glucosamine 6-phosphate + H2O = beta-D-fructose 6-phosphate + NH4(+). It participates in amino-sugar metabolism; N-acetylneuraminate degradation; D-fructose 6-phosphate from N-acetylneuraminate: step 5/5. Catalyzes the reversible isomerization-deamination of glucosamine 6-phosphate (GlcN6P) to form fructose 6-phosphate (Fru6P) and ammonium ion. The chain is Glucosamine-6-phosphate deaminase from Latilactobacillus sakei subsp. sakei (strain 23K) (Lactobacillus sakei subsp. sakei).